Here is a 218-residue protein sequence, read N- to C-terminus: Ribose-5-phosphate isomerase A (218 aa).

Substrate is bound by residues 28 to 31, 81 to 84, and 94 to 97; these read TGST, DGAD, and KGGG. The Proton acceptor role is filled by E103. A substrate-binding site is contributed by K121.

The protein belongs to the ribose 5-phosphate isomerase family. As to quaternary structure, homodimer.

It catalyses the reaction aldehydo-D-ribose 5-phosphate = D-ribulose 5-phosphate. It functions in the pathway carbohydrate degradation; pentose phosphate pathway; D-ribose 5-phosphate from D-ribulose 5-phosphate (non-oxidative stage): step 1/1. In terms of biological role, catalyzes the reversible conversion of ribose-5-phosphate to ribulose 5-phosphate. This chain is Ribose-5-phosphate isomerase A, found in Sodalis glossinidius (strain morsitans).